A 384-amino-acid polypeptide reads, in one-letter code: Cyanate transport protein CynX (384 aa).

12 helical membrane passes run 3-23 (LVLVLIGLNMRPLLTSVGPLL), 34-54 (FSVAALLTALPVVTMGGLALA), 68-88 (VAISLLLIAVGALMRELYPQS), 89-109 (ALLLSSALLGGVGIGIIQAVM), 122-142 (PLVMGLWSAALMGGGGLGAAI), 153-173 (WYQTLAWWALPAVVALFAWWW), 204-224 (YFGLINGGYASLIAWLPAFYI), 235-255 (SLLALMTLGQAAGALLMPAMA), 263-283 (LLMLALVLQLVGFCGFIWLPM), 287-307 (VLWAMVCGLGLGGAFPLCLLL), 322-342 (VAFMQGIGFIIAGLAPWFSGV), and 354-374 (WAFHALCVVGLMIITLRFAPV).

Belongs to the major facilitator superfamily. Cyanate porter (TC 2.A.1.17) family.

It localises to the cell inner membrane. This protein is part of an active transport system that transports exogenous cyanate into E.coli cells. The chain is Cyanate transport protein CynX (cynX) from Escherichia coli (strain K12).